Reading from the N-terminus, the 347-residue chain is Very-long-chain 3-oxoacyl-CoA reductase (347 aa).

The helical transmembrane segment at 20–40 threads the bilayer; the sequence is LLWVVFGLGVLKCTTLSLRFL. NADP(+)-binding residues include Asp-120, Asn-147, Tyr-223, Lys-227, Val-256, and Ser-258. The Proton donor role is filled by Tyr-223. Lys-227 acts as the Lowers pKa of active site Tyr in catalysis.

This sequence belongs to the short-chain dehydrogenases/reductases (SDR) family. Interacts with the fatty acid elongation system components ELO3 and TSC13.

The protein resides in the endoplasmic reticulum membrane. It carries out the reaction a very-long-chain (3R)-3-hydroxyacyl-CoA + NADP(+) = a very-long-chain 3-oxoacyl-CoA + NADPH + H(+). It catalyses the reaction 3-oxooctadecanoyl-CoA + NADPH + H(+) = (3R)-hydroxyoctadecanoyl-CoA + NADP(+). The enzyme catalyses 3-oxoeicosanoyl-CoA + NADPH + H(+) = (3R)-hydroxyeicosanoyl-CoA + NADP(+). The catalysed reaction is 3-oxodocosanoyl-CoA + NADPH + H(+) = (3R)-hydroxydocosanoyl-CoA + NADP(+). It carries out the reaction 3-oxotetracosanoyl-CoA + NADPH + H(+) = (3R)-hydroxytetracosanoyl-CoA + NADP(+). It catalyses the reaction 3-oxohexacosanoyl-CoA + NADPH + H(+) = (3R)-hydroxyhexacosanoyl-CoA + NADP(+). It functions in the pathway lipid metabolism; fatty acid biosynthesis. Its function is as follows. Component of the microsomal membrane bound fatty acid elongation system, which produces the 26-carbon very long-chain fatty acids (VLCFA) from palmitate. Catalyzes the reduction of the 3-ketoacyl-CoA intermediate that is formed in each cycle of fatty acid elongation. VLCFAs serve as precursors for ceramide and sphingolipids. The sequence is that of Very-long-chain 3-oxoacyl-CoA reductase (IFA38) from Saccharomyces cerevisiae (strain ATCC 204508 / S288c) (Baker's yeast).